The following is a 172-amino-acid chain: Large ribosomal subunit protein uL10 (172 aa).

Belongs to the universal ribosomal protein uL10 family. As to quaternary structure, part of the ribosomal stalk of the 50S ribosomal subunit. The N-terminus interacts with L11 and the large rRNA to form the base of the stalk. The C-terminus forms an elongated spine to which L12 dimers bind in a sequential fashion forming a multimeric L10(L12)X complex.

Its function is as follows. Forms part of the ribosomal stalk, playing a central role in the interaction of the ribosome with GTP-bound translation factors. The sequence is that of Large ribosomal subunit protein uL10 from Bradyrhizobium sp. (strain ORS 278).